The following is a 271-amino-acid chain: Type III pantothenate kinase (271 aa).

Residue 6–13 (DVRNTHTV) participates in ATP binding. 109 to 112 (GADR) provides a ligand contact to substrate. Asp-111 serves as the catalytic Proton acceptor. Asp-131 is a K(+) binding site. ATP is bound at residue Ser-134. A substrate-binding site is contributed by Thr-186.

This sequence belongs to the type III pantothenate kinase family. As to quaternary structure, homodimer. It depends on NH4(+) as a cofactor. K(+) is required as a cofactor.

The protein resides in the cytoplasm. It carries out the reaction (R)-pantothenate + ATP = (R)-4'-phosphopantothenate + ADP + H(+). It participates in cofactor biosynthesis; coenzyme A biosynthesis; CoA from (R)-pantothenate: step 1/5. Catalyzes the phosphorylation of pantothenate (Pan), the first step in CoA biosynthesis. The sequence is that of Type III pantothenate kinase from Mycolicibacterium vanbaalenii (strain DSM 7251 / JCM 13017 / BCRC 16820 / KCTC 9966 / NRRL B-24157 / PYR-1) (Mycobacterium vanbaalenii).